An 815-amino-acid chain; its full sequence is DNA topoisomerase 1 (815 aa).

Positions 3–119 (KHLLIVESPA…QRIVFTEITP (117 aa)) constitute a Toprim domain. 2 residues coordinate Mg(2+): E9 and D82. Residues 133 to 573 (ASDLVDAQQA…KFWVPFKELV (441 aa)) enclose the Topo IA-type catalytic domain. The segment at 167-172 (SAGRVQ) is interaction with DNA. The active-site O-(5'-phospho-DNA)-tyrosine intermediate is Y308. Residues 759–815 (TGKPARKNFSTKKTATKNETRKQTTKKRTTDAKATKKVSDKPVKKQIKKRIAPNITQ) are disordered. Basic and acidic residues predominate over residues 774–801 (TKNETRKQTTKKRTTDAKATKKVSDKPV).

Belongs to the type IA topoisomerase family. In terms of assembly, monomer. It depends on Mg(2+) as a cofactor.

The enzyme catalyses ATP-independent breakage of single-stranded DNA, followed by passage and rejoining.. Functionally, releases the supercoiling and torsional tension of DNA, which is introduced during the DNA replication and transcription, by transiently cleaving and rejoining one strand of the DNA duplex. Introduces a single-strand break via transesterification at a target site in duplex DNA. The scissile phosphodiester is attacked by the catalytic tyrosine of the enzyme, resulting in the formation of a DNA-(5'-phosphotyrosyl)-enzyme intermediate and the expulsion of a 3'-OH DNA strand. The free DNA strand then undergoes passage around the unbroken strand, thus removing DNA supercoils. Finally, in the religation step, the DNA 3'-OH attacks the covalent intermediate to expel the active-site tyrosine and restore the DNA phosphodiester backbone. The polypeptide is DNA topoisomerase 1 (Xylella fastidiosa (strain Temecula1 / ATCC 700964)).